The chain runs to 879 residues: Phosphoenolpyruvate carboxylase (879 aa).

Active-site residues include histidine 138 and lysine 546.

The protein belongs to the PEPCase type 1 family. Mg(2+) is required as a cofactor.

The enzyme catalyses oxaloacetate + phosphate = phosphoenolpyruvate + hydrogencarbonate. Functionally, forms oxaloacetate, a four-carbon dicarboxylic acid source for the tricarboxylic acid cycle. The polypeptide is Phosphoenolpyruvate carboxylase (Pectobacterium atrosepticum (strain SCRI 1043 / ATCC BAA-672) (Erwinia carotovora subsp. atroseptica)).